Reading from the N-terminus, the 457-residue chain is Glycine receptor subunit alpha-1 (457 aa).

Positions 1–28 (MYSFNTLRFYLWETIVFFSLAASKEAEA) are cleaved as a signal peptide. Residues 29–250 (ARSAPKPMSP…RFHLERQMGY (222 aa)) lie on the Extracellular side of the membrane. Asn-66 is a glycosylation site (N-linked (GlcNAc...) asparagine). 2 residues coordinate glycine: Arg-93 and Ser-157. Cys-166 and Cys-180 are joined by a disulfide. Zn(2+) is bound by residues Glu-220 and Asp-222. Cys-226 and Cys-237 are disulfide-bonded. Residue 230-235 (YNTGKF) coordinates strychnine. Thr-232 contributes to the glycine binding site. His-243 lines the Zn(2+) pocket. A helical membrane pass occupies residues 251–272 (YLIQMYIPSLLIVILSWISFWI). The Cytoplasmic segment spans residues 273 to 277 (NMDAA). A helical membrane pass occupies residues 278–298 (PARVGLGITTVLTMTTQSSGS). At 299 to 309 (RASLPKVSYVK) the chain is on the extracellular side. The chain crosses the membrane as a helical span at residues 310-330 (AIDIWMAVCLLFVFSALLEYA). Residues 331–425 (AVNFVSRQHK…FIQRAKKIDK (95 aa)) are Cytoplasmic-facing. Residues 391-410 (KGANNNNTTNPPPAPSKSPE) form a disordered region. Residues 426 to 446 (ISRIGFPMAFLIFNMFYWIIY) traverse the membrane as a helical segment. The Extracellular segment spans residues 447–457 (KIVRREDVHNK).

It belongs to the ligand-gated ion channel (TC 1.A.9) family. Glycine receptor (TC 1.A.9.3) subfamily. GLRA1 sub-subfamily. In terms of assembly, interacts with GLRB to form heteropentameric channels; this is probably the predominant form in vivo. Heteropentamer composed of four GLRA1 subunits and one GLRB subunit. Heteropentamer composed of two GLRA1 and three GLRB. Heteropentamer composed of three GLRA1 and two GLRB. Homopentamer (in vitro). Both homopentamers and heteropentamers form functional ion channels, but their characteristics are subtly different. In terms of tissue distribution, detected in spinal cord neurons. Detected in brain stem neurons. Detected at lower levels in hippocampus and cerebellum. Detected in the inner plexiform layer of the retina (at protein level).

The protein localises to the postsynaptic cell membrane. Its subcellular location is the synapse. It is found in the perikaryon. It localises to the cell projection. The protein resides in the dendrite. The protein localises to the cell membrane. It carries out the reaction chloride(in) = chloride(out). Its activity is regulated as follows. Channel opening is triggered by extracellular glycine. Channel characteristics depend on the subunit composition; heteropentameric channels are activated by lower glycine levels and display faster desensitization. Channel opening is also triggered by taurine and beta-alanine. Inhibited by strychnine. Strychnine binding locks the channel in a closed conformation and prevents channel opening in response to extracellular glycine. Inhibited by picrotoxin. Channel activity is enhanced by 5 uM Zn(2+) and inhibited by 100 uM Zn(2+). Its function is as follows. Subunit of heteromeric glycine-gated chloride channels. Plays an important role in the down-regulation of neuronal excitability. Contributes to the generation of inhibitory postsynaptic currents. Channel activity is potentiated by ethanol. Potentiation of channel activity by intoxicating levels of ethanol contribute to the sedative effects of ethanol. This is Glycine receptor subunit alpha-1 (Glra1) from Mus musculus (Mouse).